A 415-amino-acid polypeptide reads, in one-letter code: MSEVIEKAKRAKQASFKMALSTTDDKNEALQLISQAIINHKQEILTANALDIEEGKKKGLSEAVIDRIRLNEERLQDIADAILQVTILTDPIGEALEIIEKDNGLFITKKRVPIGVIGMVYEARPNVTVDAASLAIKTGNSVVLRGSSSAIESNKALIQVIHQSLASSSIPKEAVQLIEDTRREVANQFFQLNEYLDVLIPRGGKQLIDTVIKQSTVPVIETGAGNCHVYLDESAKVEMATEIVLNAKLQRPSVCNAIESLIIHRQWFEDHGLELLKTMQSHDIKIHGDSVVMEKFPPAIKAVERDWEKEYLSSEISVKIVDSVSEAIDHINRYGTRHSEAIITENKMNAEQFQLQVDAAAVYHNASTRFTDGFEFGYGAEIGISTQKLHARGPMGLEALTSTKFVISGSGQIRE.

This sequence belongs to the gamma-glutamyl phosphate reductase family.

Its subcellular location is the cytoplasm. The catalysed reaction is L-glutamate 5-semialdehyde + phosphate + NADP(+) = L-glutamyl 5-phosphate + NADPH + H(+). Its pathway is amino-acid biosynthesis; L-proline biosynthesis; L-glutamate 5-semialdehyde from L-glutamate: step 2/2. Functionally, catalyzes the NADPH-dependent reduction of L-glutamate 5-phosphate into L-glutamate 5-semialdehyde and phosphate. The product spontaneously undergoes cyclization to form 1-pyrroline-5-carboxylate. In Oceanobacillus iheyensis (strain DSM 14371 / CIP 107618 / JCM 11309 / KCTC 3954 / HTE831), this protein is Gamma-glutamyl phosphate reductase.